The following is a 917-amino-acid chain: Auxin response factor 17 (917 aa).

A DNA-binding region (TF-B3) is located at residues 134–236 (FCKTLTASDT…QLLLGIRRAN (103 aa)). Residues 571–649 (SVPNALSPFS…RPTAVPVPDP (79 aa)) form a disordered region. 2 stretches are compositionally biased toward low complexity: residues 576 to 594 (LSPFSQLSSPSQSSPMTLQ) and 604 to 620 (SYPDTSMSSLSPSNTST). The region spanning 786–870 (ATFVKVYKSG…SCIKILSPQE (85 aa)) is the PB1 domain.

It belongs to the ARF family. As to quaternary structure, homodimers and heterodimers. Expressed in roots, culms, leaves and young panicles.

The protein localises to the nucleus. Its function is as follows. Auxin response factors (ARFs) are transcriptional factors that bind specifically to the DNA sequence 5'-TGTCTC-3' found in the auxin-responsive promoter elements (AuxREs). The protein is Auxin response factor 17 (ARF17) of Oryza sativa subsp. japonica (Rice).